The following is a 437-amino-acid chain: Alpha-galactosidase 3 (437 aa).

The first 30 residues, 1-30 (MVIMKKMKDSVLFLVVGLFSLSVLVSQSIA), serve as a signal peptide directing secretion. Cystine bridges form between Cys-85-Cys-117 and Cys-165-Cys-195. An N-linked (GlcNAc...) asparagine glycan is attached at Asn-88. Residues 115-116 (DD) and Lys-191 each bind substrate. The active-site Nucleophile is Asp-193. The N-linked (GlcNAc...) asparagine glycan is linked to Asn-214. Residues 226 to 230 (EWGVD), Arg-244, and Asp-248 contribute to the substrate site. The Proton donor role is filled by Asp-248. 3 N-linked (GlcNAc...) asparagine glycosylation sites follow: Asn-250, Asn-315, and Asn-408.

This sequence belongs to the glycosyl hydrolase 27 family. In terms of assembly, homodimer.

The protein localises to the secreted. Its subcellular location is the cell wall. It localises to the extracellular space. It is found in the apoplast. The protein resides in the vacuole. The catalysed reaction is Hydrolysis of terminal, non-reducing alpha-D-galactose residues in alpha-D-galactosides, including galactose oligosaccharides, galactomannans and galactolipids.. Its function is as follows. May regulate leaf (and possibly other organ) development by functioning in cell wall loosening and cell wall expansion. The chain is Alpha-galactosidase 3 from Arabidopsis thaliana (Mouse-ear cress).